Reading from the N-terminus, the 358-residue chain is MKPFEVPPWEEGADIIEFEPVNPSGNGVAAKKKPKKKKPKKKKAAVPNENLNVNKAAEKFTYRQGRGPLAPPQDSSDDDYEDVEDGIRAMHKVKSGRIEKQRPPTQATKGGKKELKLKPELAQAALEAMEATSSTTPAANSLASKLQSELLGGRFRYINEQLYSTTSRKAEALFRKDSSAFEAYHAGYRQQVEKWPINPLNRIIKTIKKIPKTAIIGDFGCGEGKLAQSVPNKVYSMDLVAARSDIIACNITDTPLQARTLDVAVYCLSLMGTDLNEFFLEANRVLKLHGTVYIAEIQSRFQDVREFVRCLNACGFDLNKKDVAVNYFYFFQFKKMRHVPKNTKMKAFSLKPCLYRKR.

The disordered stretch occupies residues 1-81; the sequence is MKPFEVPPWE…PQDSSDDDYE (81 aa). Over residues 30–44 the composition is skewed to basic residues; it reads AKKKPKKKKPKKKKA. A phosphoserine mark is found at Ser75 and Ser76. Positions 185, 220, 238, and 267 each coordinate S-adenosyl-L-methionine.

This sequence belongs to the methyltransferase superfamily. RRP8 family.

The protein resides in the nucleus. The protein localises to the nucleolus. Its function is as follows. Probable methyltransferase required to silence rDNA. This is Ribosomal RNA-processing protein 8 from Drosophila melanogaster (Fruit fly).